The primary structure comprises 296 residues: GTP cyclohydrolase FolE2 (296 aa).

It belongs to the GTP cyclohydrolase IV family.

It carries out the reaction GTP + H2O = 7,8-dihydroneopterin 3'-triphosphate + formate + H(+). Its pathway is cofactor biosynthesis; 7,8-dihydroneopterin triphosphate biosynthesis; 7,8-dihydroneopterin triphosphate from GTP: step 1/1. In terms of biological role, converts GTP to 7,8-dihydroneopterin triphosphate. The polypeptide is GTP cyclohydrolase FolE2 (Ectopseudomonas mendocina (strain ymp) (Pseudomonas mendocina)).